Consider the following 2724-residue polypeptide: Eukaryotic translation initiation factor 2-alpha kinase 2 (2724 aa).

Residues 1–24 (MLNMVDQKKGINNGSSTGVINNIN) lie on the Cytoplasmic side of the membrane. The helical transmembrane segment at 25-45 (GKIKNEFIFMYLIAAGGFSCV) threads the bilayer. At 46–673 (YKIKKKKSNK…KFYIKRHNQK (628 aa)) the chain is on the extracellular side. The tract at residues 112 to 153 (KRERRGRRKEQQREQMGDKRREKRQQQRREKRKEQNTNTKKR) is disordered. Positions 120-146 (KEQQREQMGDKRREKRQQQRREKRKEQ) are enriched in basic and acidic residues. A helical membrane pass occupies residues 674–694 (TYFFENIIFYHYIIMLFLDIE). The Cytoplasmic portion of the chain corresponds to 695–718 (KYKNKFVSLFQYNLYRKLLKISKR). A helical transmembrane segment spans residues 719 to 739 (IVLMLHRIETNVICIFLLKHF). Topologically, residues 740–800 (EDYFIRKGIH…KKNIFNFFIE (61 aa)) are extracellular. Residues 801 to 821 (LFLNNIQINIFKKFEILYLII) form a helical membrane-spanning segment. Topologically, residues 822–832 (YFYNYFEKSKQ) are cytoplasmic. A helical transmembrane segment spans residues 833–853 (FDIEGIGDIIYVWLSLINLFY). Residues 854 to 876 (DDKGKCIKILSKIFAKLNKKLYY) lie on the Extracellular side of the membrane. The helical transmembrane segment at 877-897 (VYWGKLYIIMNWTTIVDTIFI) threads the bilayer. The Cytoplasmic portion of the chain corresponds to 898–908 (RNVLSINREGN). Residues 909 to 929 (YYWVIIVLKMINYFVNVAYTL) traverse the membrane as a helical segment. Residues 930-996 (TRMDIFFIKV…KKNYDIYTKY (67 aa)) are Extracellular-facing. Residues 997-1017 (AILFIYCFIIQAYYFDTLFNI) form a helical membrane-spanning segment. Topologically, residues 1018–2724 (RSLESNEIAN…GDIFLPDKCP (1707 aa)) are cytoplasmic. Lys-2029 contributes to the ATP binding site. A Protein kinase domain is found at 2084–2719 (KHYFTKCGIL…KIISAGDIFL (636 aa)). Residues 2120 to 2155 (INTLNEENQNMFCKNKEKKEENYKKIDTNISQFSEK) are a coiled coil. Residue Asp-2229 is the Proton acceptor of the active site. Residues 2479-2507 (EKMDKNKIAAQKKKKKKENKHPIGRRSTN) are disordered. The segment covering 2488-2502 (AQKKKKKKENKHPIG) has biased composition (basic residues).

This sequence belongs to the protein kinase superfamily. Ser/Thr protein kinase family. GCN2 subfamily. Post-translationally, auto-phosphorylated.

The protein localises to the membrane. The enzyme catalyses L-seryl-[protein] + ATP = O-phospho-L-seryl-[protein] + ADP + H(+). The catalysed reaction is L-threonyl-[protein] + ATP = O-phospho-L-threonyl-[protein] + ADP + H(+). Its function is as follows. Phosphorylates translation factor eIF2alpha in salivary gland sporozoites during dormancy, which leads to an inhibition of protein translation and accumulation of stalled mRNAs into granules. This Plasmodium berghei (strain Anka) protein is Eukaryotic translation initiation factor 2-alpha kinase 2.